The following is a 305-amino-acid chain: Sulfate adenylyltransferase subunit 2 (305 aa).

The protein belongs to the PAPS reductase family. CysD subfamily. In terms of assembly, heterodimer composed of CysD, the smaller subunit, and CysN.

The enzyme catalyses sulfate + ATP + H(+) = adenosine 5'-phosphosulfate + diphosphate. It participates in sulfur metabolism; hydrogen sulfide biosynthesis; sulfite from sulfate: step 1/3. Functionally, with CysN forms the ATP sulfurylase (ATPS) that catalyzes the adenylation of sulfate producing adenosine 5'-phosphosulfate (APS) and diphosphate, the first enzymatic step in sulfur assimilation pathway. APS synthesis involves the formation of a high-energy phosphoric-sulfuric acid anhydride bond driven by GTP hydrolysis by CysN coupled to ATP hydrolysis by CysD. This chain is Sulfate adenylyltransferase subunit 2, found in Ectopseudomonas mendocina (strain ymp) (Pseudomonas mendocina).